Here is a 235-residue protein sequence, read N- to C-terminus: RNA polymerase sigma factor SigI7 (235 aa).

Residues 49-62 carry the Polymerase core binding motif; the sequence is DELSIALMAFVETI. The segment at residues 191 to 210 is a DNA-binding region (H-T-H motif); the sequence is VAEIEQSLKIPRKTIERARK.

It belongs to the sigma-70 factor family. SigI subfamily. In terms of assembly, interacts with RsgI7.

The protein localises to the cytoplasm. Negatively regulated by the anti-sigma-I factor RsgI7. Sigma factors are initiation factors that promote the attachment of RNA polymerase to specific initiation sites and are then released. The sequence is that of RNA polymerase sigma factor SigI7 from Acetivibrio thermocellus (strain ATCC 27405 / DSM 1237 / JCM 9322 / NBRC 103400 / NCIMB 10682 / NRRL B-4536 / VPI 7372) (Clostridium thermocellum).